A 172-amino-acid polypeptide reads, in one-letter code: Photosystem I assembly protein Ycf3 (172 aa).

TPR repeat units lie at residues 35–70, 74–107, and 122–155; these read AFTY…EIDP, SYIL…NPFL, and GERA…TPGN.

This sequence belongs to the Ycf3 family.

It localises to the plastid. The protein localises to the chloroplast thylakoid membrane. In terms of biological role, essential for the assembly of the photosystem I (PSI) complex. May act as a chaperone-like factor to guide the assembly of the PSI subunits. This is Photosystem I assembly protein Ycf3 from Dioscorea elephantipes (Elephant's foot yam).